The sequence spans 319 residues: Transcription factor bHLH111 (319 aa).

Positions 1–23 (MDHHHHIASRNSSTTSELPSFEP) are disordered. Residues 9–18 (SRNSSTTSEL) are compositionally biased toward polar residues. The bHLH domain maps to 195–244 (SEGSTLSPEKELPKAKLRDKITTLQQIVSPFGKTDTASVLQEAITYINFY).

As to quaternary structure, homodimer.

The protein localises to the nucleus. This chain is Transcription factor bHLH111 (BHLH111), found in Arabidopsis thaliana (Mouse-ear cress).